Consider the following 307-residue polypeptide: UDP-3-O-acyl-N-acetylglucosamine deacetylase (307 aa).

Zn(2+)-binding residues include histidine 79, histidine 239, and aspartate 243. Histidine 266 acts as the Proton donor in catalysis.

Belongs to the LpxC family. It depends on Zn(2+) as a cofactor.

The enzyme catalyses a UDP-3-O-[(3R)-3-hydroxyacyl]-N-acetyl-alpha-D-glucosamine + H2O = a UDP-3-O-[(3R)-3-hydroxyacyl]-alpha-D-glucosamine + acetate. It participates in glycolipid biosynthesis; lipid IV(A) biosynthesis; lipid IV(A) from (3R)-3-hydroxytetradecanoyl-[acyl-carrier-protein] and UDP-N-acetyl-alpha-D-glucosamine: step 2/6. In terms of biological role, catalyzes the hydrolysis of UDP-3-O-myristoyl-N-acetylglucosamine to form UDP-3-O-myristoylglucosamine and acetate, the committed step in lipid A biosynthesis. The sequence is that of UDP-3-O-acyl-N-acetylglucosamine deacetylase from Tolumonas auensis (strain DSM 9187 / NBRC 110442 / TA 4).